The following is a 79-amino-acid chain: UPF0180 protein BCAH187_A1552 (79 aa).

It belongs to the UPF0180 family.

In Bacillus cereus (strain AH187), this protein is UPF0180 protein BCAH187_A1552.